The following is a 299-amino-acid chain: Putative zinc-binding protein ORF12 (299 aa).

This chain is Putative zinc-binding protein ORF12 (ORF12), found in Ictaluridae (bullhead catfishes).